The sequence spans 383 residues: 8-amino-7-oxononanoate synthase (383 aa).

Substrate-binding residues include Arg-27 and Arg-34. Position 114-115 (Gly-114–Tyr-115) interacts with pyridoxal 5'-phosphate. His-139 lines the substrate pocket. Pyridoxal 5'-phosphate-binding positions include Ser-187, Asp-212 to His-215, and Thr-232 to Lys-235. Lys-235 is modified (N6-(pyridoxal phosphate)lysine). Thr-344 contributes to the substrate binding site.

Belongs to the class-II pyridoxal-phosphate-dependent aminotransferase family. BioF subfamily. In terms of assembly, homodimer. Requires pyridoxal 5'-phosphate as cofactor.

It carries out the reaction 6-carboxyhexanoyl-[ACP] + L-alanine + H(+) = (8S)-8-amino-7-oxononanoate + holo-[ACP] + CO2. It functions in the pathway cofactor biosynthesis; biotin biosynthesis. Its function is as follows. Catalyzes the decarboxylative condensation of pimeloyl-[acyl-carrier protein] and L-alanine to produce 8-amino-7-oxononanoate (AON), [acyl-carrier protein], and carbon dioxide. The polypeptide is 8-amino-7-oxononanoate synthase (Methylorubrum extorquens (strain PA1) (Methylobacterium extorquens)).